Consider the following 24-residue polypeptide: Protein YriA (24 aa).

In Escherichia coli (strain K12), this protein is Protein YriA.